The sequence spans 257 residues: Small ribosomal subunit protein uS2 (257 aa).

The tract at residues 237–257 is disordered; that stretch reads MDEADGSEAEPEDPAAPESAE. Over residues 240 to 257 the composition is skewed to acidic residues; that stretch reads ADGSEAEPEDPAAPESAE.

This sequence belongs to the universal ribosomal protein uS2 family.

The protein is Small ribosomal subunit protein uS2 of Chlorobium phaeovibrioides (strain DSM 265 / 1930) (Prosthecochloris vibrioformis (strain DSM 265)).